Reading from the N-terminus, the 881-residue chain is MKKMSSGEIRQMFLDFFKSKGHAVEPSASLIPVDDPTLLWINSGVATLKKYFDGSVVPDNPRITNAQKSIRTNDIENVGKTARHLTFFEMLGNFSVGDYFKKEVIPWAWELLTSPKWFGFDPKRLYVTVYPKDKVTKELWQKTGVPDDHIVEAEDNFWDIGEGPSGPDSEIFYDRGQQFNNVAEDDPENYPGGENSRYVEIWNIVFSELNHLPDGRFVEQPHKNIDTGMGLERLVAVIQGTPTIFETDLFMPIIKATEKMSAGKRYGVSAQDDVSFKIIADHARTVTFAIGDGALPSNEGRGYVLRRLIRRAVLNGKKLGIDHDFLYQLVPVVGEIMKSYYPQILANQQFIQKVIESEEARFRQTLDAGVTLLNQIIADLKQDGKKEIPGADAFKLFDTYGFPVEMTNEYAQDEGLQVDMAGFKKNMAAQRDRARKARGDRQSMGSQDKVLMSITTPSKFTGWTELDHKHASLQTIVVNDQLQDSVSEGTAQLIFDETPFYAEMGGQVADHGEIKAQDGTVLADVSDVQHAPNGQNLHTVTVKGKLETGQQYWLSVDPLRRKKVSLNHTATHLLDQALRDVLGEHTHQAGSLVEPDYLRFDFTNFGQVTPKQLRQVETIVNQKIWDALPITWKEMPIEEAKKLGAIAMFGDKYGSVVRIVKIGDYNTEFDGGTHPTNSNALGLFKITSESGIGAGIRRVEAVTSKEAYEYLTQQQDWLSETAENLKIDQVKNVPSKVTQLQADLKAEQKTVAGLQAKLAAQAAAGIFDHPEEVGGLKLIAKQVQVAGMNELRQLADKWKAKQASDILVLGTEVSGKANLLVAVNDTANQAGFKAGDLIKAIAPKVGGGGGGRPDMAQAGGKNPAGIPAALSEAKTVISQKA.

It belongs to the class-II aminoacyl-tRNA synthetase family.

It is found in the cytoplasm. It catalyses the reaction tRNA(Ala) + L-alanine + ATP = L-alanyl-tRNA(Ala) + AMP + diphosphate. Functionally, catalyzes the attachment of alanine to tRNA(Ala) in a two-step reaction: alanine is first activated by ATP to form Ala-AMP and then transferred to the acceptor end of tRNA(Ala). Also edits incorrectly charged Ser-tRNA(Ala) and Gly-tRNA(Ala) via its editing domain. The protein is Alanine--tRNA ligase (alaS) of Lacticaseibacillus paracasei (strain ATCC 334 / BCRC 17002 / CCUG 31169 / CIP 107868 / KCTC 3260 / NRRL B-441) (Lactobacillus paracasei).